The primary structure comprises 234 residues: Orotidine 5'-phosphate decarboxylase (234 aa).

Substrate-binding positions include Asp-10, Lys-31, 58–67 (DLKLHDIPNT), Thr-121, Arg-183, Gln-192, Gly-212, and Arg-213. Lys-60 functions as the Proton donor in the catalytic mechanism.

The protein belongs to the OMP decarboxylase family. Type 1 subfamily. As to quaternary structure, homodimer.

It carries out the reaction orotidine 5'-phosphate + H(+) = UMP + CO2. It participates in pyrimidine metabolism; UMP biosynthesis via de novo pathway; UMP from orotate: step 2/2. In terms of biological role, catalyzes the decarboxylation of orotidine 5'-monophosphate (OMP) to uridine 5'-monophosphate (UMP). The protein is Orotidine 5'-phosphate decarboxylase of Lysinibacillus sphaericus (strain C3-41).